Here is a 372-residue protein sequence, read N- to C-terminus: Ribosomal RNA small subunit methyltransferase H (372 aa).

S-adenosyl-L-methionine contacts are provided by residues 44–46 (GGH), D63, L97, D111, and Q118. Basic and acidic residues predominate over residues 315–334 (RAAERLDPTAEQRRRTDRER). The disordered stretch occupies residues 315 to 372 (RAAERLDPTAEQRRRTDRERYRRRVRAMHQPGTGSAVRRPTPGDDGTGTDEEGEGHDS). The span at 361-372 (TGTDEEGEGHDS) shows a compositional bias: acidic residues.

The protein belongs to the methyltransferase superfamily. RsmH family.

Its subcellular location is the cytoplasm. It catalyses the reaction cytidine(1402) in 16S rRNA + S-adenosyl-L-methionine = N(4)-methylcytidine(1402) in 16S rRNA + S-adenosyl-L-homocysteine + H(+). Functionally, specifically methylates the N4 position of cytidine in position 1402 (C1402) of 16S rRNA. This Salinispora arenicola (strain CNS-205) protein is Ribosomal RNA small subunit methyltransferase H.